We begin with the raw amino-acid sequence, 178 residues long: Fatty-acid and retinol-binding protein 1 (178 aa).

Residues 1-16 (MYHRLILLALVGTTMA) form the signal peptide. Coiled-coil stretches lie at residues 67–89 (DAAL…ELRN) and 130–153 (KQAA…ELKV).

The protein belongs to the fatty-acid and retinol-binding protein (FARBP) family. In terms of processing, not glycosylated.

The protein resides in the secreted. In terms of biological role, binds retinol. Also binds the fluorescent fatty acid 11-((5-dimethylaminonaphthalene-1-sulfonyl)amino)undecanoic acid (DAUDA). The long chain fatty acid oleic acid can act competitively to displace bound DAUDA and retinol. The chain is Fatty-acid and retinol-binding protein 1 from Brugia malayi (Filarial nematode worm).